A 216-amino-acid chain; its full sequence is Uracil phosphoribosyltransferase (216 aa).

30–34 (KNLVR) contributes to the GTP binding site. 5-phospho-alpha-D-ribose 1-diphosphate-binding positions include R80, R105, and 140-148 (DPMIATAST). Uracil contacts are provided by residues I203 and 208–210 (GDA). D209 contacts 5-phospho-alpha-D-ribose 1-diphosphate.

The protein belongs to the UPRTase family. Requires Mg(2+) as cofactor.

It carries out the reaction UMP + diphosphate = 5-phospho-alpha-D-ribose 1-diphosphate + uracil. It functions in the pathway pyrimidine metabolism; UMP biosynthesis via salvage pathway; UMP from uracil: step 1/1. Its activity is regulated as follows. Allosterically activated by GTP. In terms of biological role, catalyzes the conversion of uracil and 5-phospho-alpha-D-ribose 1-diphosphate (PRPP) to UMP and diphosphate. In Saccharolobus islandicus (strain M.16.4 / Kamchatka #3) (Sulfolobus islandicus), this protein is Uracil phosphoribosyltransferase.